The sequence spans 89 residues: Small ribosomal subunit protein bS20 (89 aa).

A disordered region spans residues 1-29 (MTLANIKSAKKRAVQSEKRRQHNASQRSM).

The protein belongs to the bacterial ribosomal protein bS20 family.

Its function is as follows. Binds directly to 16S ribosomal RNA. This chain is Small ribosomal subunit protein bS20, found in Haemophilus influenzae (strain 86-028NP).